We begin with the raw amino-acid sequence, 95 residues long: Large ribosomal subunit protein bL25 (95 aa).

The protein belongs to the bacterial ribosomal protein bL25 family. As to quaternary structure, part of the 50S ribosomal subunit; part of the 5S rRNA/L5/L18/L25 subcomplex. Contacts the 5S rRNA. Binds to the 5S rRNA independently of L5 and L18.

Its function is as follows. This is one of the proteins that binds to the 5S RNA in the ribosome where it forms part of the central protuberance. The sequence is that of Large ribosomal subunit protein bL25 from Glaesserella parasuis serovar 5 (strain SH0165) (Haemophilus parasuis).